The following is a 256-amino-acid chain: tRNA pseudouridine synthase A (256 aa).

Aspartate 52 acts as the Nucleophile in catalysis. Tyrosine 110 lines the substrate pocket.

The protein belongs to the tRNA pseudouridine synthase TruA family. In terms of assembly, homodimer.

It carries out the reaction uridine(38/39/40) in tRNA = pseudouridine(38/39/40) in tRNA. Formation of pseudouridine at positions 38, 39 and 40 in the anticodon stem and loop of transfer RNAs. The sequence is that of tRNA pseudouridine synthase A from Stenotrophomonas maltophilia (strain R551-3).